Here is a 258-residue protein sequence, read N- to C-terminus: Granzyme A (258 aa).

Residues 1–26 form the signal peptide; the sequence is MNIPFPFSFPPAICLLLIPGVFPVSC. Residues 27-28 constitute a propeptide, activation peptide; the sequence is EG. Positions 29–255 constitute a Peptidase S1 domain; the sequence is IIGGNEVAPH…HLNWIKKTIA (227 aa). Cys-52 and Cys-68 form a disulfide bridge. Residues His-67 and Asp-112 each act as charge relay system in the active site. 3 cysteine pairs are disulfide-bonded: Cys-146–Cys-217, Cys-178–Cys-196, and Cys-207–Cys-230. An N-linked (GlcNAc...) asparagine glycan is attached at Asn-169. The Charge relay system role is filled by Ser-211.

It belongs to the peptidase S1 family. Granzyme subfamily. In terms of assembly, homodimer; disulfide-linked. Interacts with APEX1.

The protein resides in the secreted. Its subcellular location is the cytoplasmic granule. It carries out the reaction Hydrolysis of proteins, including fibronectin, type IV collagen and nucleolin. Preferential cleavage: -Arg-|-Xaa-, -Lys-|-Xaa- &gt;&gt; -Phe-|-Xaa- in small molecule substrates.. In terms of biological role, abundant protease in the cytosolic granules of cytotoxic T-cells and NK-cells which activates caspase-independent pyroptosis when delivered into the target cell through the immunological synapse. It cleaves after Lys or Arg. Cleaves APEX1 after 'Lys-31' and destroys its oxidative repair activity. Cleaves the nucleosome assembly protein SET after 'Lys-189', which disrupts its nucleosome assembly activity and allows the SET complex to translocate into the nucleus to nick and degrade the DNA. In Bos taurus (Bovine), this protein is Granzyme A (GZMA).